An 80-amino-acid polypeptide reads, in one-letter code: Putative membrane protein insertion efficiency factor (80 aa).

The disordered stretch occupies residues 61–80 (KTGKDPVPDRFSLKRNQEGE). Residues 62 to 80 (TGKDPVPDRFSLKRNQEGE) show a composition bias toward basic and acidic residues.

Belongs to the UPF0161 family.

The protein localises to the cell membrane. Could be involved in insertion of integral membrane proteins into the membrane. This Streptococcus pneumoniae (strain P1031) protein is Putative membrane protein insertion efficiency factor.